A 462-amino-acid polypeptide reads, in one-letter code: tRNA(Ile)-lysidine synthase (462 aa).

31-36 (SGGRDS) serves as a coordination point for ATP.

The protein belongs to the tRNA(Ile)-lysidine synthase family.

It localises to the cytoplasm. It catalyses the reaction cytidine(34) in tRNA(Ile2) + L-lysine + ATP = lysidine(34) in tRNA(Ile2) + AMP + diphosphate + H(+). Ligates lysine onto the cytidine present at position 34 of the AUA codon-specific tRNA(Ile) that contains the anticodon CAU, in an ATP-dependent manner. Cytidine is converted to lysidine, thus changing the amino acid specificity of the tRNA from methionine to isoleucine. The polypeptide is tRNA(Ile)-lysidine synthase (Ralstonia nicotianae (strain ATCC BAA-1114 / GMI1000) (Ralstonia solanacearum)).